We begin with the raw amino-acid sequence, 488 residues long: Probable cytochrome P450 6u1 (488 aa).

Cysteine 430 lines the heme pocket.

This sequence belongs to the cytochrome P450 family. It depends on heme as a cofactor.

It localises to the endoplasmic reticulum membrane. It is found in the microsome membrane. Its function is as follows. May be involved in the metabolism of insect hormones and in the breakdown of synthetic insecticides. This chain is Probable cytochrome P450 6u1 (Cyp6u1), found in Drosophila melanogaster (Fruit fly).